The primary structure comprises 202 residues: Superoxide dismutase [Mn] (202 aa).

The Mn(2+) site is built by H27, H82, D164, and H168.

The protein belongs to the iron/manganese superoxide dismutase family. As to quaternary structure, homodimer. It depends on Mn(2+) as a cofactor.

It carries out the reaction 2 superoxide + 2 H(+) = H2O2 + O2. Functionally, destroys superoxide anion radicals which are normally produced within the cells and which are toxic to biological systems. This Listeria innocua serovar 6a (strain ATCC BAA-680 / CLIP 11262) protein is Superoxide dismutase [Mn] (sodA).